The chain runs to 796 residues: Cadherin-11 (796 aa).

A signal peptide spans 1-24 (MKENYCLQAALVCLSMLYHSQAFA). Positions 25-53 (LERRSHLHPSFHGHHEKGKEGQVLQRSKR) are excised as a propeptide. 5 Cadherin domains span residues 54-159 (GWVW…PPEF), 160-268 (LHEI…PPKF), 269-383 (PQSV…PPMF), 384-486 (LAPS…DNAP), and 487-612 (KFAA…YILN). Over 54–617 (GWVWNQFFVI…AYILNAGLST (564 aa)) the chain is Extracellular. N-linked (GlcNAc...) asparagine glycosylation is found at asparagine 455 and asparagine 540. The helical transmembrane segment at 618–640 (GALIAILACIVILLVIVVLFVTL) threads the bilayer. The Cytoplasmic segment spans residues 641–796 (RRQKKEPLIV…GSKDTFDDDS (156 aa)). Serine 788 is subject to Phosphoserine. Threonine 791 carries the post-translational modification Phosphothreonine.

Interacts with PCDH8. In terms of tissue distribution, selectively expressed in osteoblastic cell lines, precursor cell lines of osteoblasts, and primary osteoblastic cells from calvaria, as well as in lung, testis, and brain tissues at low levels.

It is found in the cell membrane. In terms of biological role, cadherins are calcium-dependent cell adhesion proteins. They preferentially interact with themselves in a homophilic manner in connecting cells; cadherins may thus contribute to the sorting of heterogeneous cell types. Required for proper focal adhesion assembly. Involved in the regulation of cell migration. This chain is Cadherin-11 (Cdh11), found in Mus musculus (Mouse).